The chain runs to 422 residues: Histidinol dehydrogenase (422 aa).

Y123, Q183, and N206 together coordinate NAD(+). Substrate contacts are provided by S229, Q251, and H254. Positions 251 and 254 each coordinate Zn(2+). Catalysis depends on proton acceptor residues E320 and H321. 4 residues coordinate substrate: H321, D354, E408, and H413. Zn(2+) is bound at residue D354. Residue H413 participates in Zn(2+) binding.

It belongs to the histidinol dehydrogenase family. Requires Zn(2+) as cofactor.

It carries out the reaction L-histidinol + 2 NAD(+) + H2O = L-histidine + 2 NADH + 3 H(+). It participates in amino-acid biosynthesis; L-histidine biosynthesis; L-histidine from 5-phospho-alpha-D-ribose 1-diphosphate: step 9/9. Catalyzes the sequential NAD-dependent oxidations of L-histidinol to L-histidinaldehyde and then to L-histidine. This chain is Histidinol dehydrogenase, found in Natronomonas pharaonis (strain ATCC 35678 / DSM 2160 / CIP 103997 / JCM 8858 / NBRC 14720 / NCIMB 2260 / Gabara) (Halobacterium pharaonis).